Here is a 373-residue protein sequence, read N- to C-terminus: Centrosomal protein of 41 kDa (373 aa).

The interval 89 to 127 (QRLEDNDSATSEPDAEITAKTNGNGSPGEQSPSPVQFIN) is disordered. Ser-96 and Ser-99 each carry phosphoserine. The span at 107-127 (AKTNGNGSPGEQSPSPVQFIN) shows a compositional bias: polar residues. Thr-109 carries the post-translational modification Phosphothreonine. A phosphoserine mark is found at Ser-114 and Ser-121. The region spanning 169 to 266 (PDCPFLLLDV…LAQKFPEGLI (98 aa)) is the Rhodanese domain. Disordered stretches follow at residues 275 to 300 (QQAL…ENKW) and 315 to 373 (EEDQ…KPWK). At Arg-343 the chain carries Omega-N-methylarginine.

This sequence belongs to the CEP41 family. As to quaternary structure, found in a complex with TTLL6.

The protein localises to the cytoplasm. Its subcellular location is the cytoskeleton. It localises to the microtubule organizing center. It is found in the centrosome. The protein resides in the cell projection. The protein localises to the cilium. Its subcellular location is the cilium basal body. Its function is as follows. Required during ciliogenesis for tubulin glutamylation in cilium. Probably acts by participating in the transport of TTLL6, a tubulin polyglutamylase, between the basal body and the cilium. The sequence is that of Centrosomal protein of 41 kDa (CEP41) from Bos taurus (Bovine).